We begin with the raw amino-acid sequence, 576 residues long: G protein-coupled receptor kinase 6 (576 aa).

Residues 1–185 form an N-terminal region; that stretch reads MELENIVANT…LERQPVTKNT (185 aa). The region spanning 53–171 is the RGS domain; that stretch reads YHSLCERQPI…LDSIYFNRFL (119 aa). One can recognise a Protein kinase domain in the interval 186–448; the sequence is FRQYRVLGKG…AREVKEHPLF (263 aa). ATP-binding positions include 192 to 200, lysine 215, and 264 to 270; these read LGKGGFGEV and TLMNGGD. Aspartate 311 functions as the Proton acceptor in the catalytic mechanism. 315–318 contacts ATP; the sequence is ENIL. The AGC-kinase C-terminal domain maps to 449 to 514; that stretch reads KKLNFKRLGA…GSVSIPWQNE (66 aa). Serine 484 bears the Phosphoserine mark. Threonine 485 carries the post-translational modification Phosphothreonine. 3 S-palmitoyl cysteine lipidation sites follow: cysteine 561, cysteine 562, and cysteine 565. Phosphoserine occurs at positions 566 and 568.

Belongs to the protein kinase superfamily. AGC Ser/Thr protein kinase family. GPRK subfamily. Interacts with GIT1. As to expression, expressed in the brain in striatal neurons.

It localises to the membrane. The enzyme catalyses [G-protein-coupled receptor] + ATP = [G-protein-coupled receptor]-phosphate + ADP + H(+). Functionally, specifically phosphorylates the activated forms of G protein-coupled receptors. Such receptor phosphorylation initiates beta-arrestin-mediated receptor desensitization, internalization, and signaling events leading to their desensitization. Seems to be involved in the desensitization of D2-like dopamine receptors in striatum and chemokine receptor CXCR4 which is critical for CXCL12-induced cell chemotaxis. Phosphorylates rhodopsin (RHO) (in vitro) and a non G-protein-coupled receptor, LRP6 during Wnt signaling (in vitro). The polypeptide is G protein-coupled receptor kinase 6 (Grk6) (Mus musculus (Mouse)).